A 375-amino-acid chain; its full sequence is Actin-binding Rho-activating protein (375 aa).

Composition is skewed to basic and acidic residues over residues 1-11 (MAPGEREREAG) and 79-99 (KPDR…SHIK). Disordered stretches follow at residues 1–20 (MAPG…LRKV) and 38–99 (NENS…SHIK). Residues Ser150 and Ser182 each carry the phosphoserine modification. The segment covering 173-182 (QEEPTWKSDS) has biased composition (basic and acidic residues). Residues 173–204 (QEEPTWKSDSVDTEDSGYGGDMEERPEQDAAP) are disordered. Actin-binding stretches follow at residues 193 to 293 (DMEE…AERA) and 294 to 375 (KRAE…TLLE). 2 interaction with actin regions span residues 234 to 279 (SQVD…GDEG) and 346 to 375 (MRAR…TLLE).

Binds F-actin and ABLIM1, ABLIM2 and ABLIM3. Interaction with ABLIM2 and ABLIM3 enhances activity. Expressed specifically in heart and skeletal muscle.

It is found in the cytoplasm. It localises to the myofibril. The protein localises to the sarcomere. The protein resides in the cytoskeleton. Functionally, acts as an activator of serum response factor (SRF)-dependent transcription possibly by inducing nuclear translocation of MKL1 or MKL2 and through a mechanism requiring Rho-actin signaling. The chain is Actin-binding Rho-activating protein from Mus musculus (Mouse).